The sequence spans 161 residues: Allophycocyanin alpha chain (161 aa).

An N4-methylasparagine modification is found at Asn-71. Cys-81 is a (2R,3E)-phycocyanobilin binding site.

The protein belongs to the phycobiliprotein family. As to quaternary structure, heterodimer of an alpha and a beta chain. In terms of processing, contains one covalently linked phycocyanobilin chromophore.

It is found in the plastid. Its subcellular location is the cyanelle thylakoid membrane. Functionally, light-harvesting photosynthetic bile pigment-protein from the phycobiliprotein complex. Allophycocyanin has a maximum absorption at approximately 650 nanometers. The sequence is that of Allophycocyanin alpha chain (apcA) from Cyanophora paradoxa.